The chain runs to 469 residues: MARGLGAPHWVAVGLLTWATLGLLVAGLGGHDDLHDDLQEDFHGHSHRHSHEDFHHGHSHAHGHGHTHESIWHGHTHDHDHGHSHEDLHHGHSHGYSHESLYHRGHGHDHEHSHGGYGESGAPGIKQDLDAVTLWAYALGATVLISAAPFFVLFLIPVESNSPRHRSLLQILLSFASGGLLGDAFLHLIPHALEPHSHHTLEQPGHGHSHSGQGPILSVGLWVLSGIVAFLVVEKFVRHVKGGHGHSHGHGHAHSHTRGSHGHGRQERSTKEKQSSEEEEKETRGVQKRRGGSTVPKDGPVRPQNAEEEKRGLDLRVSGYLNLAADLAHNFTDGLAIGASFRGGRGLGILTTMTVLLHEVPHEVGDFAILVQSGCSKKQAMRLQLLTAVGALAGTACALLTEGGAVGSEIAGGAGPGWVLPFTAGGFIYVATVSVLPELLREASPLQSLLEVLGLLGGVIMMVLIAHLE.

Residues 10–30 form a helical membrane-spanning segment; it reads WVAVGLLTWATLGLLVAGLGG. 2 stretches are compositionally biased toward basic and acidic residues: residues 42 to 56 and 66 to 114; these read FHGH…DFHH and HTHE…EHSH. Residues 42–121 are disordered; that stretch reads FHGHSHRHSH…HSHGGYGESG (80 aa). Histidine 66 bears the Pros-methylhistidine mark. A run of 3 helical transmembrane segments spans residues 138–158, 169–189, and 214–234; these read ALGA…LIPV, LQIL…LHLI, and GPIL…LVVE. A compositionally biased stretch (basic residues) spans 242 to 263; sequence GGHGHSHGHGHAHSHTRGSHGH. The segment at 242–310 is disordered; that stretch reads GGHGHSHGHG…VRPQNAEEEK (69 aa). The span at 264 to 285 shows a compositional bias: basic and acidic residues; that stretch reads GRQERSTKEKQSSEEEEKETRG. Phosphoserine; by CK2 occurs at positions 275 and 276. The next 2 membrane-spanning stretches (helical) occupy residues 381–401 and 417–436; these read MRLQ…ALLT and GWVL…VSVL.

It belongs to the ZIP transporter (TC 2.A.5) family. KE4/Catsup subfamily. Homodimer. In terms of processing, rapidly phosphorylated by CK2 following Zn(2+) treatment. This phosphorylation is required for efficient cytosolic Zn(2+) release. Post-translationally, methylation at some His residue by METTL9 leads to reduced zinc-binding. Widely expressed.

The protein resides in the endoplasmic reticulum membrane. The protein localises to the golgi apparatus. It is found in the cis-Golgi network membrane. The enzyme catalyses Zn(2+)(in) = Zn(2+)(out). Phosphorylation activates zinc transport activity. Transports Zn(2+) from the endoplasmic reticulum (ER)/Golgi apparatus to the cytosol, playing an essential role in the regulation of cytosolic zinc levels. Acts as a gatekeeper of zinc release from intracellular stores, requiring post-translational activation by phosphorylation, resulting in activation of multiple downstream pathways leading to cell growth and proliferation. Has an essential role in B cell development and is required for proper B cell receptor signaling. Plays an important role in maintaining intestinal epithelial homeostasis and skin dermis development by regulating ER function. Controls cell signaling pathways involved in glucose metabolism in skeletal muscle. Has a protective role against ER stress in different biological contexts. Mediates Zn(2+)-induced ferroptosis. The polypeptide is Zinc transporter SLC39A7 (SLC39A7) (Homo sapiens (Human)).